The following is a 314-amino-acid chain: ATP synthase gamma chain (314 aa).

The protein belongs to the ATPase gamma chain family. As to quaternary structure, F-type ATPases have 2 components, CF(1) - the catalytic core - and CF(0) - the membrane proton channel. CF(1) has five subunits: alpha(3), beta(3), gamma(1), delta(1), epsilon(1). CF(0) has three main subunits: a, b and c.

The protein localises to the cell membrane. Its function is as follows. Produces ATP from ADP in the presence of a proton gradient across the membrane. The gamma chain is believed to be important in regulating ATPase activity and the flow of protons through the CF(0) complex. This Lactiplantibacillus plantarum (strain ATCC BAA-793 / NCIMB 8826 / WCFS1) (Lactobacillus plantarum) protein is ATP synthase gamma chain.